A 131-amino-acid chain; its full sequence is Large ribosomal subunit protein bL17 (131 aa).

Belongs to the bacterial ribosomal protein bL17 family. In terms of assembly, part of the 50S ribosomal subunit. Contacts protein L32.

The chain is Large ribosomal subunit protein bL17 from Cupriavidus metallidurans (strain ATCC 43123 / DSM 2839 / NBRC 102507 / CH34) (Ralstonia metallidurans).